Consider the following 351-residue polypeptide: Type II restriction enzyme NmeDI (351 aa).

The catalysed reaction is Endonucleolytic cleavage of DNA to give specific double-stranded fragments with terminal 5'-phosphates.. Functionally, a P subtype restriction enzyme that recognizes the double-stranded sequence 5'-N(12)RCCGGYN(12)-3' and cleaves on both sides of the recognition sequence. The protein is Type II restriction enzyme NmeDI (nmeDIRP) of Neisseria meningitidis serogroup C.